The sequence spans 84 residues: Mitochondrial import inner membrane translocase subunit Tim9 (84 aa).

The Twin CX3C motif signature appears at 36-60; it reads CFQSCITNFRIRKLDDEEQLCVYKC. 2 disulfide bridges follow: Cys36–Cys60 and Cys40–Cys56.

The protein belongs to the small Tim family. Heterohexamer; composed of 3 copies of timm9 and 3 copies of timm10, named soluble 70 kDa complex. Associates directly with the TIM22 complex, whose core is composed of timm22. Interacts with the transmembrane regions of multi-pass transmembrane proteins in transit.

It localises to the mitochondrion inner membrane. In terms of biological role, component of the TIM22 complex, a complex that mediates the import and insertion of multi-pass transmembrane proteins into the mitochondrial inner membrane. The TIM22 complex forms a twin-pore translocase that uses the membrane potential as external driving force. This Dictyostelium discoideum (Social amoeba) protein is Mitochondrial import inner membrane translocase subunit Tim9 (timm9).